Reading from the N-terminus, the 349-residue chain is Phosphoribosylformylglycinamidine cyclo-ligase (349 aa).

The protein belongs to the AIR synthase family.

The protein resides in the cytoplasm. The enzyme catalyses 2-formamido-N(1)-(5-O-phospho-beta-D-ribosyl)acetamidine + ATP = 5-amino-1-(5-phospho-beta-D-ribosyl)imidazole + ADP + phosphate + H(+). The protein operates within purine metabolism; IMP biosynthesis via de novo pathway; 5-amino-1-(5-phospho-D-ribosyl)imidazole from N(2)-formyl-N(1)-(5-phospho-D-ribosyl)glycinamide: step 2/2. This is Phosphoribosylformylglycinamidine cyclo-ligase from Methanococcus maripaludis (strain C6 / ATCC BAA-1332).